The chain runs to 624 residues: (-)-beta-phellandrene synthase 1, chloroplastic (624 aa).

A chloroplast-targeting transit peptide spans 1-48; the sequence is MAIVSSVPLASKSCLHKSLISSIHKLKPFCRTIPTLGMSRPGKYVMPS. Mg(2+) is bound by residues aspartate 375, aspartate 379, and aspartate 527. The DDXXD motif signature appears at 375 to 379; it reads DDMYD.

Belongs to the terpene synthase family. Tpsd subfamily. Requires Mg(2+) as cofactor. It depends on Mn(2+) as a cofactor.

It localises to the plastid. Its subcellular location is the chloroplast. It catalyses the reaction (2E)-geranyl diphosphate = (-)-beta-phellandrene + diphosphate. It functions in the pathway terpene metabolism; oleoresin biosynthesis. Functionally, terpene synthase (TPS) involved in the biosynthesis of monoterpene natural products included in conifer oleoresin secretions and volatile emissions; these compounds contribute to biotic and abiotic stress defense against herbivores and pathogens. Catalyzes the conversion of (2E)-geranyl diphosphate (GPP) to (-)-beta-phellandrene. This chain is (-)-beta-phellandrene synthase 1, chloroplastic, found in Picea sitchensis (Sitka spruce).